Reading from the N-terminus, the 313-residue chain is tRNA uridine(34) hydroxylase (313 aa).

The Rhodanese domain occupies 124 to 218 (SDPEVLLIDT…YLEEVPQEET (95 aa)). C178 serves as the catalytic Cysteine persulfide intermediate.

It belongs to the TrhO family.

The enzyme catalyses uridine(34) in tRNA + AH2 + O2 = 5-hydroxyuridine(34) in tRNA + A + H2O. Catalyzes oxygen-dependent 5-hydroxyuridine (ho5U) modification at position 34 in tRNAs. The protein is tRNA uridine(34) hydroxylase of Pseudomonas fluorescens (strain Pf0-1).